A 347-amino-acid polypeptide reads, in one-letter code: VIP36-like protein (347 aa).

The first 43 residues, 1 to 43 (MAAASRPSWWQRWRRRAWARDGAKLLLFLLLLGSGPGPRHVRA), serve as a signal peptide directing secretion. Over 44 to 312 (GQAVEYLKRE…VPPTPLSGLA (269 aa)) the chain is Lumenal. Residues 48 to 273 (EYLKREHSLS…DVISLKLFEL (226 aa)) enclose the L-type lectin-like domain. A carbohydrate contacts are provided by serine 92 and aspartate 127. Aspartate 158, tyrosine 160, and asparagine 162 together coordinate Ca(2+). 160 to 162 (YPN) is a binding site for a carbohydrate. Asparagine 180 carries an N-linked (GlcNAc...) asparagine glycan. A carbohydrate is bound at residue histidine 187. Aspartate 190 serves as a coordination point for Ca(2+). Cysteine 199 and cysteine 236 are disulfide-bonded. An a carbohydrate-binding site is contributed by 257–259 (GDL). The helical transmembrane segment at 313–335 (LFLIVFFSLVFSVFAIVIGIILY) threads the bilayer. At 336 to 347 (NKWQDQSRKRFY) the chain is on the cytoplasmic side. The Endoplasmic reticulum retention signal motif lies at 343–345 (RKR).

It is found in the endoplasmic reticulum membrane. Its subcellular location is the golgi apparatus membrane. In terms of biological role, may be involved in the regulation of export from the endoplasmic reticulum of a subset of glycoproteins. May function as a regulator of ERGIC-53. In Mus musculus (Mouse), this protein is VIP36-like protein (Lman2l).